We begin with the raw amino-acid sequence, 392 residues long: GTPase Obg (392 aa).

The Obg domain maps to 1-159 (MKFIDEALIR…RDLQLELMLL (159 aa)). Positions 160–333 (ADVGMLGLPN…LCRDIMDFIE (174 aa)) constitute an OBG-type G domain. GTP-binding positions include 166–173 (GLPNAGKS), 191–195 (FTTLV), 213–216 (DIPG), 283–286 (NKID), and 314–316 (SAA). Ser173 and Thr193 together coordinate Mg(2+). Positions 362 to 392 (EQVFTEDDQEGDDWDDWSEDDEEGVEIIYKP) are disordered. A compositionally biased stretch (acidic residues) spans 365–386 (FTEDDQEGDDWDDWSEDDEEGV).

It belongs to the TRAFAC class OBG-HflX-like GTPase superfamily. OBG GTPase family. In terms of assembly, monomer. Requires Mg(2+) as cofactor.

The protein localises to the cytoplasm. An essential GTPase which binds GTP, GDP and possibly (p)ppGpp with moderate affinity, with high nucleotide exchange rates and a fairly low GTP hydrolysis rate. Plays a role in control of the cell cycle, stress response, ribosome biogenesis and in those bacteria that undergo differentiation, in morphogenesis control. The protein is GTPase Obg of Histophilus somni (strain 129Pt) (Haemophilus somnus).